Here is a 360-residue protein sequence, read N- to C-terminus: Peptide chain release factor 1 (360 aa).

At Gln235 the chain carries N5-methylglutamine.

The protein belongs to the prokaryotic/mitochondrial release factor family. Methylated by PrmC. Methylation increases the termination efficiency of RF1.

Its subcellular location is the cytoplasm. In terms of biological role, peptide chain release factor 1 directs the termination of translation in response to the peptide chain termination codons UAG and UAA. The sequence is that of Peptide chain release factor 1 from Burkholderia pseudomallei (strain 1106a).